The primary structure comprises 289 residues: tRNA U34 carboxymethyltransferase (289 aa).

Carboxy-S-adenosyl-L-methionine contacts are provided by residues lysine 60, tryptophan 74, lysine 79, glycine 98, 120–122 (DPS), 147–148 (VE), tyrosine 167, and arginine 282.

It belongs to the class I-like SAM-binding methyltransferase superfamily. CmoB family. In terms of assembly, homotetramer.

It catalyses the reaction carboxy-S-adenosyl-L-methionine + 5-hydroxyuridine(34) in tRNA = 5-carboxymethoxyuridine(34) in tRNA + S-adenosyl-L-homocysteine + H(+). Functionally, catalyzes carboxymethyl transfer from carboxy-S-adenosyl-L-methionine (Cx-SAM) to 5-hydroxyuridine (ho5U) to form 5-carboxymethoxyuridine (cmo5U) at position 34 in tRNAs. The protein is tRNA U34 carboxymethyltransferase of Campylobacter concisus (strain 13826).